We begin with the raw amino-acid sequence, 402 residues long: Phosphoglycerate kinase (402 aa).

Substrate is bound by residues 21–23, Arg-36, 59–62, Arg-119, and Arg-154; these read DFN and HLGR. ATP contacts are provided by residues Lys-207, Gly-298, Glu-329, and 356-359; that span reads GGDA.

The protein belongs to the phosphoglycerate kinase family. Monomer.

The protein localises to the cytoplasm. The catalysed reaction is (2R)-3-phosphoglycerate + ATP = (2R)-3-phospho-glyceroyl phosphate + ADP. Its pathway is carbohydrate degradation; glycolysis; pyruvate from D-glyceraldehyde 3-phosphate: step 2/5. The polypeptide is Phosphoglycerate kinase (pgk) (Chlamydia pneumoniae (Chlamydophila pneumoniae)).